Consider the following 182-residue polypeptide: MGILFTRMFSSVFGNKEARILVLGLDNAGKTTILYRLQMGEVVSTIPTIGFNVETVQYNNIKFQVWDLGGQTSIRPYWRCYFPNTQAVIYVVDSSDTDRIGVAKEEFHAILEEEELKGAVVLIFANKQDLPGALDDAAVTEALELHKIKSRQWAIFKTCAVKGEGLFEGLDWLSNTLKSGSG.

A lipid anchor (N-myristoyl glycine) is attached at Gly2. GTP-binding positions include 24-31 (GLDNAGKT), 67-71 (DLGGQ), and 126-129 (NKQD).

It belongs to the small GTPase superfamily. Arf family.

It localises to the golgi apparatus. The catalysed reaction is GTP + H2O = GDP + phosphate + H(+). In terms of biological role, GTP-binding protein involved in protein trafficking; may modulate vesicle budding and uncoating within the Golgi apparatus. The polypeptide is ADP-ribosylation factor 1 (ARF1) (Brassica rapa subsp. pekinensis (Chinese cabbage)).